The following is a 217-amino-acid chain: 3,4-dihydroxy-2-butanone 4-phosphate synthase (217 aa).

Residues 37–38, Asp-42, 150–154, and Glu-174 each bind D-ribulose 5-phosphate; these read RE and RRGHT. Glu-38 is a Mg(2+) binding site. His-153 lines the Mg(2+) pocket.

This sequence belongs to the DHBP synthase family. As to quaternary structure, homodimer. It depends on Mg(2+) as a cofactor. Requires Mn(2+) as cofactor.

The enzyme catalyses D-ribulose 5-phosphate = (2S)-2-hydroxy-3-oxobutyl phosphate + formate + H(+). It functions in the pathway cofactor biosynthesis; riboflavin biosynthesis; 2-hydroxy-3-oxobutyl phosphate from D-ribulose 5-phosphate: step 1/1. Its function is as follows. Catalyzes the conversion of D-ribulose 5-phosphate to formate and 3,4-dihydroxy-2-butanone 4-phosphate. In Syntrophotalea carbinolica (strain DSM 2380 / NBRC 103641 / GraBd1) (Pelobacter carbinolicus), this protein is 3,4-dihydroxy-2-butanone 4-phosphate synthase.